Reading from the N-terminus, the 62-residue chain is Large ribosomal subunit protein bL32 (62 aa).

Over residues 1 to 18 the composition is skewed to basic residues; that stretch reads MGVPKKRTSKMRRDRRRA. Residues 1-22 form a disordered region; that stretch reads MGVPKKRTSKMRRDRRRAANNN.

This sequence belongs to the bacterial ribosomal protein bL32 family.

The sequence is that of Large ribosomal subunit protein bL32 from Myxococcus xanthus (strain DK1622).